The chain runs to 201 residues: Imidazoleglycerol-phosphate dehydratase (201 aa).

The protein belongs to the imidazoleglycerol-phosphate dehydratase family.

Its subcellular location is the cytoplasm. The catalysed reaction is D-erythro-1-(imidazol-4-yl)glycerol 3-phosphate = 3-(imidazol-4-yl)-2-oxopropyl phosphate + H2O. The protein operates within amino-acid biosynthesis; L-histidine biosynthesis; L-histidine from 5-phospho-alpha-D-ribose 1-diphosphate: step 6/9. The polypeptide is Imidazoleglycerol-phosphate dehydratase (Methanopyrus kandleri (strain AV19 / DSM 6324 / JCM 9639 / NBRC 100938)).